The chain runs to 85 residues: Translation initiation factor IF-1 (85 aa).

In terms of domain architecture, S1-like spans 1–72 (MAKEELIEMH…SKGRITFRHI (72 aa)).

This sequence belongs to the IF-1 family. In terms of assembly, component of the 30S ribosomal translation pre-initiation complex which assembles on the 30S ribosome in the order IF-2 and IF-3, IF-1 and N-formylmethionyl-tRNA(fMet); mRNA recruitment can occur at any time during PIC assembly.

The protein resides in the cytoplasm. One of the essential components for the initiation of protein synthesis. Stabilizes the binding of IF-2 and IF-3 on the 30S subunit to which N-formylmethionyl-tRNA(fMet) subsequently binds. Helps modulate mRNA selection, yielding the 30S pre-initiation complex (PIC). Upon addition of the 50S ribosomal subunit IF-1, IF-2 and IF-3 are released leaving the mature 70S translation initiation complex. The sequence is that of Translation initiation factor IF-1 from Polaromonas naphthalenivorans (strain CJ2).